A 141-amino-acid polypeptide reads, in one-letter code: Galactose-6-phosphate isomerase subunit LacA (141 aa).

This sequence belongs to the LacAB/RpiB family. Heteromultimeric protein consisting of LacA and LacB.

It catalyses the reaction aldehydo-D-galactose 6-phosphate = keto-D-tagatose 6-phosphate. It participates in carbohydrate metabolism; D-galactose 6-phosphate degradation; D-tagatose 6-phosphate from D-galactose 6-phosphate: step 1/1. The sequence is that of Galactose-6-phosphate isomerase subunit LacA from Streptococcus pneumoniae (strain Taiwan19F-14).